Consider the following 465-residue polypeptide: Ribulose bisphosphate carboxylase large chain (465 aa).

Position 4 is an N6,N6,N6-trimethyllysine (Lys4). Substrate-binding residues include Asn113 and Thr163. Catalysis depends on Lys165, which acts as the Proton acceptor. Lys167 contributes to the substrate binding site. The Mg(2+) site is built by Lys191, Asp193, and Glu194. N6-carboxylysine is present on Lys191. The Proton acceptor role is filled by His284. Substrate contacts are provided by Arg285, His317, and Ser369.

This sequence belongs to the RuBisCO large chain family. Type I subfamily. In terms of assembly, heterohexadecamer of 8 large chains and 8 small chains; disulfide-linked. The disulfide link is formed within the large subunit homodimers. Requires Mg(2+) as cofactor. In terms of processing, the disulfide bond which can form in the large chain dimeric partners within the hexadecamer appears to be associated with oxidative stress and protein turnover.

The protein localises to the plastid. The protein resides in the chloroplast. It carries out the reaction 2 (2R)-3-phosphoglycerate + 2 H(+) = D-ribulose 1,5-bisphosphate + CO2 + H2O. The catalysed reaction is D-ribulose 1,5-bisphosphate + O2 = 2-phosphoglycolate + (2R)-3-phosphoglycerate + 2 H(+). Functionally, ruBisCO catalyzes two reactions: the carboxylation of D-ribulose 1,5-bisphosphate, the primary event in carbon dioxide fixation, as well as the oxidative fragmentation of the pentose substrate in the photorespiration process. Both reactions occur simultaneously and in competition at the same active site. The polypeptide is Ribulose bisphosphate carboxylase large chain (Ephedra tweediana (Vining horsetail)).